We begin with the raw amino-acid sequence, 557 residues long: uncharacterized protein (557 aa).

The Helicase ATP-binding domain occupies 70-224 (KVVEKMNGKA…FNLVSLLKPG (155 aa)). 82 to 90 (ADEVGLGKT) contributes to the ATP binding site. A DEAH box motif is present at residues 175–178 (DEAH). Residues 363 to 524 (QVVDLIKKID…NFEEHLHDIL (162 aa)) enclose the Helicase C-terminal domain.

This sequence belongs to the SNF2/RAD54 helicase family.

This is an uncharacterized protein from Bacillus subtilis (strain 168).